The primary structure comprises 238 residues: Bacterial microcompartment shell protein PduB (238 aa).

2 BMC circularly permuted domains span residues 14-125 (FVGA…VYNA) and 126-225 (KAGH…LSQF). An intrachain disulfide couples Cys158 to Cys197.

This sequence belongs to the EutL/PduB family. In terms of assembly, homotrimerizes to form a pseudohexamer with a central pore 7.5 Angstroms wide and 22 Angstroms long; the pore channel in the crystal binds up to 4 glycerol molecules. A disulfide bond forms in the pore, it is not clear if this is an artifact. The trimers pack into an array.

Its subcellular location is the bacterial microcompartment. It functions in the pathway polyol metabolism; 1,2-propanediol degradation. One of the major shell proteins of the bacterial microcompartment (BMC) dedicated to 1,2-propanediol (1,2-PD) degradation. Probably involved in a propanediol fermentation/reuterin formation pathway. This is Bacterial microcompartment shell protein PduB from Limosilactobacillus reuteri (strain DSM 20016) (Lactobacillus reuteri).